The following is a 229-amino-acid chain: ATP synthase subunit a (229 aa).

The next 6 helical transmembrane spans lie at 16–36 (YAHV…GAAA), 81–101 (YIPF…LGMI), 110–130 (NMNT…FQGV), 142–162 (FMGP…VSHI), 175–195 (VMMG…IGVP), and 196–216 (IPFY…FTLL).

It belongs to the ATPase A chain family. In terms of assembly, F-type ATPases have 2 components, CF(1) - the catalytic core - and CF(0) - the membrane proton channel. CF(1) has five subunits: alpha(3), beta(3), gamma(1), delta(1), epsilon(1). CF(0) has three main subunits: a(1), b(2) and c(9-12). The alpha and beta chains form an alternating ring which encloses part of the gamma chain. CF(1) is attached to CF(0) by a central stalk formed by the gamma and epsilon chains, while a peripheral stalk is formed by the delta and b chains.

The protein resides in the cell inner membrane. Key component of the proton channel; it plays a direct role in the translocation of protons across the membrane. This chain is ATP synthase subunit a, found in Bdellovibrio bacteriovorus (strain ATCC 15356 / DSM 50701 / NCIMB 9529 / HD100).